We begin with the raw amino-acid sequence, 347 residues long: Endophilin-A3 (347 aa).

A membrane-binding amphipathic helix region spans residues 1–21 (MSVAGLKKQFHKASQLFSEKI). The BAR domain occupies 18–249 (SEKISGAEGT…LQMRISAASS (232 aa)). The segment at 60–87 (PNPAYRAKLGMLNTVSKIRGQVKTTGYP) is required for dimerization upon membrane association. Residues 181–201 (EEVRQAVEKFEESKELAERSM) adopt a coiled-coil conformation. The interaction with ARC stretch occupies residues 218-254 (FIEAALDYHRQSTEILQELQSKLQMRISAASSVPRRE). Residues 248–271 (SSVPRREYKPRPVKRSSSELNGVS) are disordered. S265 bears the Phosphoserine mark. Residues 285–344 (MDQPCCRGLYDFEPENQGELGFKEGDIITLTNQIDENWYEGMIHGESGFFPINYVEVIVP) enclose the SH3 domain.

The protein belongs to the endophilin family. As to quaternary structure, interacts with ARC. Interacts with DNM1, SGIP1 and SYNJ1. Interacts with the huntingtin exon 1 protein (HDEX1P) containing a glutamine repeat in the pathological range and promotes formation of insoluble polyglutamine-containing aggregates in vivo. Interacts with DYDC1. Interacts with FASLG. Interacts with ATXN2. Interacts with BIN2. As to expression, brain and testis.

The protein localises to the cytoplasm. The protein resides in the early endosome membrane. Implicated in endocytosis. May recruit other proteins to membranes with high curvature. The protein is Endophilin-A3 (SH3GL3) of Homo sapiens (Human).